Consider the following 298-residue polypeptide: Probable 3-hydroxyacyl-CoA dehydrogenase F54C8.1 (298 aa).

It belongs to the 3-hydroxyacyl-CoA dehydrogenase family. As to quaternary structure, homodimer.

Its subcellular location is the mitochondrion matrix. It carries out the reaction a (3S)-3-hydroxyacyl-CoA + NAD(+) = a 3-oxoacyl-CoA + NADH + H(+). The protein operates within lipid metabolism; fatty acid beta-oxidation. The chain is Probable 3-hydroxyacyl-CoA dehydrogenase F54C8.1 from Caenorhabditis elegans.